The following is a 476-amino-acid chain: MAAAYSTVGAVNRAPLSLNGSGARASLVPSTAFFGSSLKKSAAKFPKASSGNFKIVAQEISEDQQTDKDKWKGLAYDISDDQQDITRGKGMVDTLFQAPMQSGTHYAVMSSYDYISQGLRQYNLDNNMDGFYIAPAFMDKLVVHITKNFLSLPNIKIPLILGIWGGKGQGKSFQCELVFAKMGINPIMMSAGELESGNAGEPAKLIRQRYREAADIIKKGKMCCLFINDLDAGAGRMGGTTQYTVNNQMVNATLMNIADNPTNVQLPGMYNKEENPRVPIIVTGNDFSTLYAPLIRDGRMEKFYWAPTREDRIGVCKGIFRTDNVADDDIVKLVDTFPGQSIDFFGALRARVYHDEVRKWVSEVGVDTIGKKLVNSKEGPPSFEQPKMTIDKLLGYGGMLVQEQENVKRVQLADKYMSEAALGDANNDAIKRGTFYGGQAAQQVGNVPVPEGCTDPQATNYDPTARSDDGSCVYKF.

Residues 1 to 56 (MAAAYSTVGAVNRAPLSLNGSGARASLVPSTAFFGSSLKKSAAKFPKASSGNFKIV) constitute a chloroplast transit peptide. Residue 165–172 (GGKGQGKS) coordinates ATP.

It belongs to the RuBisCO activase family.

It is found in the plastid. The protein localises to the chloroplast stroma. Functionally, activation of RuBisCO (ribulose-1,5-bisphosphate carboxylase/oxygenase; EC 4.1.1.39) involves the ATP-dependent carboxylation of the epsilon-amino group of lysine leading to a carbamate structure. In Larrea tridentata (Creosote bush), this protein is Ribulose bisphosphate carboxylase/oxygenase activase 1, chloroplastic (RCA1).